Consider the following 138-residue polypeptide: MATIHVDVVSAEASIFSGEAKFVALPGEMGELGIYPRHTPLITRIKPGAVRVERADNGEEEFVFVAGGILEVQPDRVTVLADTAIRGHDLDEAKAEEAKKAAEEAMKNAKSDIDFAKAQGEFAAMAAQIAALRKFRKK.

The protein belongs to the ATPase epsilon chain family. As to quaternary structure, F-type ATPases have 2 components, CF(1) - the catalytic core - and CF(0) - the membrane proton channel. CF(1) has five subunits: alpha(3), beta(3), gamma(1), delta(1), epsilon(1). CF(0) has three main subunits: a, b and c.

The protein localises to the cell inner membrane. In terms of biological role, produces ATP from ADP in the presence of a proton gradient across the membrane. This chain is ATP synthase epsilon chain, found in Methylibium petroleiphilum (strain ATCC BAA-1232 / LMG 22953 / PM1).